The primary structure comprises 306 residues: tRNA pseudouridine synthase B (306 aa).

The active-site Nucleophile is the Asp43.

Belongs to the pseudouridine synthase TruB family. Type 1 subfamily.

It catalyses the reaction uridine(55) in tRNA = pseudouridine(55) in tRNA. Functionally, responsible for synthesis of pseudouridine from uracil-55 in the psi GC loop of transfer RNAs. The chain is tRNA pseudouridine synthase B from Syntrophobacter fumaroxidans (strain DSM 10017 / MPOB).